Reading from the N-terminus, the 784-residue chain is Protein-tyrosine-phosphatase MKP1 (784 aa).

Disordered stretches follow at residues 1–73 and 94–118; these read MVGR…NSKA and PKAGSDDVGEWPHPPTPSGNKTGER. Low complexity predominate over residues 22–34; the sequence is WRSASWSASRTAS. Phosphothreonine is present on residues Thr64 and Thr109. Residues 149–291 enclose the Tyrosine-protein phosphatase domain; sequence ECSKVADHIY…LLQCQKRVHA (143 aa). Cys235 (phosphocysteine intermediate) is an active-site residue. 235-241 provides a ligand contact to substrate; sequence CCQGVSR. Residues 488–586 are disordered; it reads HSSGSPSSTT…ASPSLAERRG (99 aa). 2 stretches are compositionally biased toward low complexity: residues 489–510 and 521–553; these read SSGSPSSTTSSSSTASPPFLSP and SLKSFSQSSGRSSLRPSIPPSLTLPKFSSLSLL. Over residues 554-577 the composition is skewed to polar residues; that stretch reads PSQTSPKESRGVNTFLQPSPNRKA. Ser558 and Ser572 each carry phosphoserine.

As to quaternary structure, interacts with MPK6. May interact with MPK3 and MPK4. In terms of processing, phosphorylated on threonine and serine residues by MPK6.

The protein resides in the cytoplasm. The protein localises to the cytosol. It catalyses the reaction O-phospho-L-tyrosyl-[protein] + H2O = L-tyrosyl-[protein] + phosphate. In terms of biological role, protein-tyrosine-phosphatase that acts as a negative regulator of MPK6 and MPK3 signaling by dephosphorylating and repressing MPK6 and MPK3. Modulates defense response by repressing salicylic acid (SA) production, camalexin biosynthesis and SNC1-mediated responses. Acts as a negative regulator of MPK6-mediated pathogen-associated molecular pattern (PAMP) responses, including MPK6 and MPK3 activation, accumulation of extracellular reactive oxygen species and inhibition of seedling growth. Involved in UV-B stress tolerance. May be involved in salt and genotoxic stress responses. The polypeptide is Protein-tyrosine-phosphatase MKP1 (MKP1) (Arabidopsis thaliana (Mouse-ear cress)).